The primary structure comprises 184 residues: Probable DNA-directed RNA polymerase subunit delta (184 aa).

One can recognise an HTH HARE-type domain in the interval 14–81; it reads LSMIEVARAI…GENVWALRSW (68 aa). Disordered regions lie at residues 88 to 107 and 118 to 184; these read DEEV…KHHK and GDDD…DEDD. Acidic residues predominate over residues 118–164; it reads GDDDIIDYDNDDPEDDDLDAATDDSDDDYSDDDSDYDEDNDDADDVL.

The protein belongs to the RpoE family. RNAP is composed of a core of 2 alpha, a beta and a beta' subunits. The core is associated with a delta subunit and one of several sigma factors.

In terms of biological role, participates in both the initiation and recycling phases of transcription. In the presence of the delta subunit, RNAP displays an increased specificity of transcription, a decreased affinity for nucleic acids, and an increased efficiency of RNA synthesis because of enhanced recycling. This is Probable DNA-directed RNA polymerase subunit delta from Lactobacillus acidophilus (strain ATCC 700396 / NCK56 / N2 / NCFM).